A 117-amino-acid chain; its full sequence is Hainantoxin-XV-5 (117 aa).

An N-terminal signal peptide occupies residues 1 to 20 (MKLCAVIIASLLVCVAVASS). The disordered stretch occupies residues 20 to 55 (SSDNQKEFAQEKEMTREETQSLGEHEKDDEVTGSEE). The propeptide occupies 21–56 (SDNQKEFAQEKEMTREETQSLGEHEKDDEVTGSEER). Residues 23–55 (NQKEFAQEKEMTREETQSLGEHEKDDEVTGSEE) are compositionally biased toward basic and acidic residues. Disulfide bonds link Cys58-Cys72, Cys65-Cys78, Cys69-Cys115, and Cys71-Cys91.

Belongs to the neurotoxin 03 (Tx2) family. 02 subfamily. HNTX-XV sub-subfamily. Expressed by the venom gland.

The protein resides in the secreted. Putative ion channel inhibitor. The sequence is that of Hainantoxin-XV-5 from Cyriopagopus hainanus (Chinese bird spider).